A 726-amino-acid chain; its full sequence is Penicillin-binding protein 1A (726 aa).

Residues M1–K3 lie on the Cytoplasmic side of the membrane. The chain crosses the membrane as a helical; Signal-anchor for type II membrane protein span at residues L4 to I24. The Periplasmic segment spans residues P25–R726. The segment at S45–E213 is transglycosylase. The active-site Proton donor; for transglycosylase activity is the E83. The segment at K379–D662 is transpeptidase. S432 (acyl-ester intermediate; for transpeptidase activity) is an active-site residue.

In the N-terminal section; belongs to the glycosyltransferase 51 family. The protein in the C-terminal section; belongs to the transpeptidase family.

It localises to the cell inner membrane. It carries out the reaction [GlcNAc-(1-&gt;4)-Mur2Ac(oyl-L-Ala-gamma-D-Glu-L-Lys-D-Ala-D-Ala)](n)-di-trans,octa-cis-undecaprenyl diphosphate + beta-D-GlcNAc-(1-&gt;4)-Mur2Ac(oyl-L-Ala-gamma-D-Glu-L-Lys-D-Ala-D-Ala)-di-trans,octa-cis-undecaprenyl diphosphate = [GlcNAc-(1-&gt;4)-Mur2Ac(oyl-L-Ala-gamma-D-Glu-L-Lys-D-Ala-D-Ala)](n+1)-di-trans,octa-cis-undecaprenyl diphosphate + di-trans,octa-cis-undecaprenyl diphosphate + H(+). It catalyses the reaction Preferential cleavage: (Ac)2-L-Lys-D-Ala-|-D-Ala. Also transpeptidation of peptidyl-alanyl moieties that are N-acyl substituents of D-alanine.. It participates in cell wall biogenesis; peptidoglycan biosynthesis. The sequence is that of Penicillin-binding protein 1A (mrcA) from Aquifex aeolicus (strain VF5).